Reading from the N-terminus, the 418-residue chain is Putative ion-transport protein YfeO (418 aa).

12 helical membrane-spanning segments follow: residues leucine 10 to valine 30, aspartate 54 to isoleucine 74, alanine 99 to proline 119, glutamate 120 to proline 140, isoleucine 149 to isoleucine 169, leucine 186 to proline 206, isoleucine 223 to cysteine 243, valine 258 to valine 278, aspartate 300 to phenylalanine 320, glycine 322 to histidine 342, valine 343 to valine 363, and leucine 371 to methionine 391.

Belongs to the chloride channel (TC 2.A.49) family.

The protein localises to the cell membrane. In Shigella boydii serotype 18 (strain CDC 3083-94 / BS512), this protein is Putative ion-transport protein YfeO.